The primary structure comprises 233 residues: Uridylate kinase (233 aa).

ATP contacts are provided by residues 8-11, Gly-51, and Arg-55; that span reads KLSG. Residues Asp-68 and 129–136 contribute to the UMP site; that span reads TSNPFFTT. ATP-binding residues include Thr-156, Tyr-162, and Asp-165.

This sequence belongs to the UMP kinase family. As to quaternary structure, homohexamer.

The protein localises to the cytoplasm. The enzyme catalyses UMP + ATP = UDP + ADP. Its pathway is pyrimidine metabolism; CTP biosynthesis via de novo pathway; UDP from UMP (UMPK route): step 1/1. Inhibited by UTP. Functionally, catalyzes the reversible phosphorylation of UMP to UDP. The chain is Uridylate kinase from Pseudothermotoga lettingae (strain ATCC BAA-301 / DSM 14385 / NBRC 107922 / TMO) (Thermotoga lettingae).